Consider the following 113-residue polypeptide: Prefoldin subunit beta (113 aa).

This sequence belongs to the prefoldin subunit beta family. As to quaternary structure, heterohexamer of two alpha and four beta subunits.

It localises to the cytoplasm. Molecular chaperone capable of stabilizing a range of proteins. Seems to fulfill an ATP-independent, HSP70-like function in archaeal de novo protein folding. The polypeptide is Prefoldin subunit beta (pfdB) (Methanocaldococcus jannaschii (strain ATCC 43067 / DSM 2661 / JAL-1 / JCM 10045 / NBRC 100440) (Methanococcus jannaschii)).